The chain runs to 539 residues: O-phosphoserine--tRNA(Cys) ligase (539 aa).

Substrate-binding positions include 188–190 (HMT), 233–235 (SAS), 275–276 (YY), and asparagine 327.

The protein belongs to the class-II aminoacyl-tRNA synthetase family. O-phosphoseryl-tRNA(Cys) synthetase subfamily. Homotetramer. Interacts with SepCysS.

The catalysed reaction is tRNA(Cys) + O-phospho-L-serine + ATP = O-phospho-L-seryl-tRNA(Cys) + AMP + diphosphate. In terms of biological role, catalyzes the attachment of O-phosphoserine (Sep) to tRNA(Cys). The protein is O-phosphoserine--tRNA(Cys) ligase of Methanosarcina barkeri (strain Fusaro / DSM 804).